A 168-amino-acid polypeptide reads, in one-letter code: Scytalone dehydratase arp1 (168 aa).

Residues tyrosine 29 and tyrosine 49 each contribute to the substrate site. Residues histidine 84 and histidine 109 contribute to the active site. Residue asparagine 130 participates in substrate binding.

The protein belongs to the scytalone dehydratase family. In terms of assembly, homotrimer. Each subunit contains an active site, located in the central part of the hydrophobic core of the monomer, which functions independently.

Its subcellular location is the endosome. The catalysed reaction is scytalone = 1,3,8-trihydroxynaphthalene + H2O. The protein operates within pigment biosynthesis; melanin biosynthesis. With respect to regulation, fenoxanil inhibits arp1 scytalone dehydratase activity. Scytalone dehydratase; part of the gene cluster that mediates the biosynthesis of dihydroxynaphthalene (DHN)-melanin, a bluish-green pigment and a structural component of the conidial wall. The first step of the pathway is the production of the heptaketide naphtopyrone YWA1 by the polyketide synthase alb1 though condensation of acetyl-CoA with malonyl-CoA. The naphtopyrone YWA1 is then converted to the pentaketide 1,3,6,8-tetrahydroxynaphthalene (1,3,6,8-THN) by the heptaketide hydrolyase ayg1 though chain-length shortening. 1,3,6,8-THN is substrate of the hydroxynaphthalene reductase arp2 to yield scytalone. The scytalone dehydratase arp1 then reduces scytalone to 1,3,8-THN. 1,3,8-THN is also substrate of the hydroxynaphthalene reductase arp2 to yield vermelone. Vermelone is further converted by the multicopper oxidase abr1 to 1,8-DHN. Finally the laccase abr2 transforms 1,8-DHN to DHN-melanin. DHN-melanin biosynthesis appears to be initiated in endosomes where early enzymes (abl1, ayg1, arp1 and arp2) localize, with exocytosis leading to melanin deposition on the cell surface where late enzymes (abr1 and abr2) localize. DHN-melanin is an important structural component of the outer cell wall and is required for the presence of conidial surface hydrophobins. DHN-melanin also plays a crucial role in fungal virulence, including a protective role against the host's immune defenses. DHN-melanin also protects conidia against amoeba predation. This chain is Scytalone dehydratase arp1, found in Aspergillus fumigatus (strain ATCC MYA-4609 / CBS 101355 / FGSC A1100 / Af293) (Neosartorya fumigata).